Here is a 119-residue protein sequence, read N- to C-terminus: Probable non-functional T cell receptor gamma variable 11 (119 aa).

A signal peptide spans 1-18 (MPLVVAVIFFSLWVFALG). One can recognise an Ig-like domain in the interval 23–119 (PEISISRPAN…VYHCACWIRH (97 aa)). Residue N32 is glycosylated (N-linked (GlcNAc...) asparagine).

Most probably, the gamma-delta TR is not assembled due to incorrect folding of the gamma chain. Gamma-delta TR is a heterodimer composed of a gamma and delta chain; disulfide-linked. The gamma-delta TR is associated with the transmembrane signaling CD3 coreceptor proteins following the stoichiometry: a single gamma-delta TR heterodimer associates with one CD3D-CD3E heterodimer, one CD3G-CD3E heterodimer and one CD247 homodimer forming a stable octameric structure. Upon activation, gamma-delta TR complex associates with FCER1G to initiate intracellular signaling.

It localises to the cell membrane. Functionally, probable non-functional open reading frame (ORF) of V region of the variable domain of T cell receptor (TR) gamma chain. Non-functional ORF generally cannot participate in the synthesis of a productive T cell receptor (TR) chain due to altered V-(D)-J or switch recombination and/or splicing site (at mRNA level) and/or conserved amino acid change (protein level). Gamma-delta TRs recognize a variety of self and foreign non-peptide antigens frequently expressed at the epithelial boundaries between the host and external environment, including endogenous lipids presented by MH-like protein CD1D and phosphoantigens presented by butyrophilin-like molecule BTN3A1. Upon antigen recognition induces rapid, innate-like immune responses involved in pathogen clearance and tissue repair. Binding of gamma-delta TR complex to antigen triggers phosphorylation of immunoreceptor tyrosine-based activation motifs (ITAMs) in the CD3 chains by the LCK and FYN kinases, allowing the recruitment, phosphorylation, and activation of ZAP70 that facilitates phosphorylation of the scaffolding proteins LCP2 and LAT. This lead to the formation of a supramolecular signalosome that recruits the phospholipase PLCG1, resulting in calcium mobilization and ERK activation, ultimately leading to T cell expansion and differentiation into effector cells. Gamma-delta TRs are produced through somatic rearrangement of a limited repertoire of variable (V), diversity (D), and joining (J) genes. The potential diversity of gamma-delta TRs is conferred by the unique ability to rearrange (D) genes in tandem and to utilize all three reading frames. The combinatorial diversity is considerably increased by the sequence exonuclease trimming and random nucleotide (N) region additions which occur during the V-(D)-J rearrangements. The protein is Probable non-functional T cell receptor gamma variable 11 of Homo sapiens (Human).